We begin with the raw amino-acid sequence, 639 residues long: Threonine--tRNA ligase (639 aa).

The TGS domain maps to 1-61 (MIRITLPDNS…DHDARLQIIT (61 aa)). The interval 242–533 (DHRRLGRELD…LIEQHAGALP (292 aa)) is catalytic. Residues cysteine 333, histidine 384, and histidine 510 each contribute to the Zn(2+) site.

Belongs to the class-II aminoacyl-tRNA synthetase family. In terms of assembly, homodimer. It depends on Zn(2+) as a cofactor.

It is found in the cytoplasm. The enzyme catalyses tRNA(Thr) + L-threonine + ATP = L-threonyl-tRNA(Thr) + AMP + diphosphate + H(+). Functionally, catalyzes the attachment of threonine to tRNA(Thr) in a two-step reaction: L-threonine is first activated by ATP to form Thr-AMP and then transferred to the acceptor end of tRNA(Thr). Also edits incorrectly charged L-seryl-tRNA(Thr). This Paracidovorax citrulli (strain AAC00-1) (Acidovorax citrulli) protein is Threonine--tRNA ligase.